A 468-amino-acid chain; its full sequence is Cysteine--tRNA ligase (468 aa).

Residue C33 coordinates Zn(2+). Residues A35–H45 carry the 'HIGH' region motif. Zn(2+)-binding residues include C211, H236, and E240. The 'KMSKS' region motif lies at K267 to S271. K270 is an ATP binding site.

This sequence belongs to the class-I aminoacyl-tRNA synthetase family. In terms of assembly, monomer. It depends on Zn(2+) as a cofactor.

The protein resides in the cytoplasm. It carries out the reaction tRNA(Cys) + L-cysteine + ATP = L-cysteinyl-tRNA(Cys) + AMP + diphosphate. The polypeptide is Cysteine--tRNA ligase (Mycobacterium marinum (strain ATCC BAA-535 / M)).